The following is a 216-amino-acid chain: NADH-quinone oxidoreductase subunit C (216 aa).

The protein belongs to the complex I 30 kDa subunit family. As to quaternary structure, NDH-1 is composed of 14 different subunits. Subunits NuoB, C, D, E, F, and G constitute the peripheral sector of the complex.

It is found in the cell inner membrane. The catalysed reaction is a quinone + NADH + 5 H(+)(in) = a quinol + NAD(+) + 4 H(+)(out). Functionally, NDH-1 shuttles electrons from NADH, via FMN and iron-sulfur (Fe-S) centers, to quinones in the respiratory chain. The immediate electron acceptor for the enzyme in this species is believed to be ubiquinone. Couples the redox reaction to proton translocation (for every two electrons transferred, four hydrogen ions are translocated across the cytoplasmic membrane), and thus conserves the redox energy in a proton gradient. This Francisella tularensis subsp. tularensis (strain FSC 198) protein is NADH-quinone oxidoreductase subunit C.